The primary structure comprises 375 residues: Stomatin-2 (375 aa).

The segment at 1–75 (MKTQPSEESA…IPVPTGQPRG (75 aa)) is disordered. Residues 11 to 50 (SPAPVNPGNSGNSGNRRASSTRISFSDQLDGGDSGDSSSN) are compositionally biased toward low complexity. A helical transmembrane segment spans residues 120–140 (GLGFCGWFLMGLSWIMVISTF).

Belongs to the band 7/mec-2 family.

It localises to the membrane. Its function is as follows. May be involved in cilia-related function. The sequence is that of Stomatin-2 (sto-2) from Caenorhabditis elegans.